A 361-amino-acid polypeptide reads, in one-letter code: Chorismate synthase (361 aa).

2 residues coordinate NADP(+): Arg48 and Arg54. FMN-binding positions include Arg125–Ser127, Asn238–Ala239, Gly278, Lys293–Ser297, and Arg319.

Belongs to the chorismate synthase family. As to quaternary structure, homotetramer. Requires FMNH2 as cofactor.

It catalyses the reaction 5-O-(1-carboxyvinyl)-3-phosphoshikimate = chorismate + phosphate. Its pathway is metabolic intermediate biosynthesis; chorismate biosynthesis; chorismate from D-erythrose 4-phosphate and phosphoenolpyruvate: step 7/7. In terms of biological role, catalyzes the anti-1,4-elimination of the C-3 phosphate and the C-6 proR hydrogen from 5-enolpyruvylshikimate-3-phosphate (EPSP) to yield chorismate, which is the branch point compound that serves as the starting substrate for the three terminal pathways of aromatic amino acid biosynthesis. This reaction introduces a second double bond into the aromatic ring system. This is Chorismate synthase from Escherichia coli O157:H7.